The chain runs to 175 residues: Adenine phosphoribosyltransferase (175 aa).

It belongs to the purine/pyrimidine phosphoribosyltransferase family. Homodimer.

It localises to the cytoplasm. It carries out the reaction AMP + diphosphate = 5-phospho-alpha-D-ribose 1-diphosphate + adenine. Its pathway is purine metabolism; AMP biosynthesis via salvage pathway; AMP from adenine: step 1/1. Functionally, catalyzes a salvage reaction resulting in the formation of AMP, that is energically less costly than de novo synthesis. The polypeptide is Adenine phosphoribosyltransferase (Francisella philomiragia subsp. philomiragia (strain ATCC 25017 / CCUG 19701 / FSC 153 / O#319-036)).